We begin with the raw amino-acid sequence, 500 residues long: Abscisic acid 8'-hydroxylase 3 (500 aa).

A helical membrane pass occupies residues 3-23; the sequence is ASFVIVIVISFFISLAFMCYV. Cys-426 is a heme binding site.

This sequence belongs to the cytochrome P450 family. Requires heme as cofactor.

The protein localises to the membrane. It carries out the reaction 2-cis-(+)-abscisate + reduced [NADPH--hemoprotein reductase] + O2 = (+)-8'-hydroxyabscisate + oxidized [NADPH--hemoprotein reductase] + H2O + H(+). The protein operates within plant hormone degradation; abscisic acid degradation. Involved in the oxidative degradation of abscisic acid. This is Abscisic acid 8'-hydroxylase 3 (CYP707A7) from Oryza sativa subsp. japonica (Rice).